A 97-amino-acid chain; its full sequence is Signal recognition particle 19 kDa protein (97 aa).

The protein belongs to the SRP19 family. As to quaternary structure, part of the signal recognition particle protein translocation system, which is composed of SRP and FtsY. Archaeal SRP consists of a 7S RNA molecule of 300 nucleotides and two protein subunits: SRP54 and SRP19.

It is found in the cytoplasm. Functionally, involved in targeting and insertion of nascent membrane proteins into the cytoplasmic membrane. Binds directly to 7S RNA and mediates binding of the 54 kDa subunit of the SRP. The polypeptide is Signal recognition particle 19 kDa protein (Pyrobaculum calidifontis (strain DSM 21063 / JCM 11548 / VA1)).